A 474-amino-acid polypeptide reads, in one-letter code: Siroheme synthase (474 aa).

The precorrin-2 dehydrogenase /sirohydrochlorin ferrochelatase stretch occupies residues 1–203; that stretch reads MKLFPLFADL…QRPEEAERLL (203 aa). Residues 22-23 and 43-44 contribute to the NAD(+) site; these read EI and PA. Ser128 carries the post-translational modification Phosphoserine. The uroporphyrinogen-III C-methyltransferase stretch occupies residues 216 to 474; the sequence is GSVVLVGAGP…QRPAPAALAA (259 aa). Pro225 is an S-adenosyl-L-methionine binding site. The Proton acceptor role is filled by Asp248. The Proton donor role is filled by Lys270. S-adenosyl-L-methionine-binding positions include 302–304, Ile307, 332–333, Met384, and Gly413; these read GGD and TA.

This sequence in the N-terminal section; belongs to the precorrin-2 dehydrogenase / sirohydrochlorin ferrochelatase family. In the C-terminal section; belongs to the precorrin methyltransferase family.

It carries out the reaction uroporphyrinogen III + 2 S-adenosyl-L-methionine = precorrin-2 + 2 S-adenosyl-L-homocysteine + H(+). The catalysed reaction is precorrin-2 + NAD(+) = sirohydrochlorin + NADH + 2 H(+). The enzyme catalyses siroheme + 2 H(+) = sirohydrochlorin + Fe(2+). The protein operates within cofactor biosynthesis; adenosylcobalamin biosynthesis; precorrin-2 from uroporphyrinogen III: step 1/1. It functions in the pathway cofactor biosynthesis; adenosylcobalamin biosynthesis; sirohydrochlorin from precorrin-2: step 1/1. Its pathway is porphyrin-containing compound metabolism; siroheme biosynthesis; precorrin-2 from uroporphyrinogen III: step 1/1. It participates in porphyrin-containing compound metabolism; siroheme biosynthesis; siroheme from sirohydrochlorin: step 1/1. The protein operates within porphyrin-containing compound metabolism; siroheme biosynthesis; sirohydrochlorin from precorrin-2: step 1/1. Multifunctional enzyme that catalyzes the SAM-dependent methylations of uroporphyrinogen III at position C-2 and C-7 to form precorrin-2 via precorrin-1. Then it catalyzes the NAD-dependent ring dehydrogenation of precorrin-2 to yield sirohydrochlorin. Finally, it catalyzes the ferrochelation of sirohydrochlorin to yield siroheme. The polypeptide is Siroheme synthase (Bordetella petrii (strain ATCC BAA-461 / DSM 12804 / CCUG 43448)).